We begin with the raw amino-acid sequence, 154 residues long: Myoglobin (154 aa).

The 147-residue stretch at 2–148 (GLSDQEWQQV…FRNDMASKYK (147 aa)) folds into the Globin domain. H65 serves as a coordination point for nitrite. H65 is a binding site for O2. H94 lines the heme b pocket.

Belongs to the globin family. Monomeric.

The protein localises to the cytoplasm. Its subcellular location is the sarcoplasm. It catalyses the reaction Fe(III)-heme b-[protein] + nitric oxide + H2O = Fe(II)-heme b-[protein] + nitrite + 2 H(+). The catalysed reaction is H2O2 + AH2 = A + 2 H2O. Monomeric heme protein which primary function is to store oxygen and facilitate its diffusion within muscle tissues. Reversibly binds oxygen through a pentacoordinated heme iron and enables its timely and efficient release as needed during periods of heightened demand. Depending on the oxidative conditions of tissues and cells, and in addition to its ability to bind oxygen, it also has a nitrite reductase activity whereby it regulates the production of bioactive nitric oxide. Under stress conditions, like hypoxia and anoxia, it also protects cells against reactive oxygen species thanks to its pseudoperoxidase activity. This chain is Myoglobin (MB), found in Anas poecilorhyncha (Indian spot-billed duck).